The sequence spans 498 residues: MPTPSASSPQPKGFRRAVSEQDTKQAEAVTSPRFIGRRQSLIEDARKEREAAAAAAAAAVASAEPGNPLEAVVFEERDGNAVLNLLFSLRGTKPSSLSRALKVFETFEAKIHHLETRPAQRPLAGSPHLEYFVRFEVPSGDLAALLSSVRRVSDDVRSAREDKVPWFPRKVSELDKCHHLVTKFDPDLDLDHPGFSDQAYRQRRKLIAEIAFQYKQGEPIPHVEYTKEEIATWKEVYATLKGLYATHACREHLEAFQLLERYCGYREDSIPQLEDVSHFLKERTGFQLRPVAGLLSARDFLASLAFRVFQCTQYIRHASSPMHSPEPDCCHELLGHVPMLADRTFAQFSQDIGLASLGASDEEIEKLSTVYWFTVEFGLCKQNGELKAYGAGLLSSYGELLHSLSEEPEVRAFDPDTAAVQPYQDQTYQPVYFVSESFSDAKDKLRNYASRIQRPFSVKFDPYTLAIDVLDSPHTIRRSLEGVQDELHTLTQALSAIS.

A compositionally biased stretch (polar residues) spans 1–10 (MPTPSASSPQ). Residues 1-33 (MPTPSASSPQPKGFRRAVSEQDTKQAEAVTSPR) form a disordered region. Phosphoserine is present on residues Ser19 and Ser31. Ser40 bears the Phosphoserine; by CaMK2 and PKA mark. Fe cation-binding residues include His331, His336, and Glu376. A Phosphoserine modification is found at Ser472.

This sequence belongs to the biopterin-dependent aromatic amino acid hydroxylase family. As to quaternary structure, homotetramer. Interacts (when phosphorylated at Ser-19) with YWHAG; one YWHAG dimer bounds to one TH tetramer and this interaction may influence the phosphorylation and dephosphorylation of other sites. Interacts with NT5DC2; the interaction results in reduced phosphorylation and decreased catalytic activity of TH. Requires Fe(2+) as cofactor. Post-translationally, phosphorylated on Ser-19, Ser-31 and Ser-40 by several protein kinases with different site specificities. Phosphorylation at Ser-31 and Ser-40 leads to an increase of TH activity. Phosphorylation at Ser-40 activates the enzyme and also counteracts the feedback inhibition of TH by catecholamines. Phosphorylation of Ser-19 and Ser-31 triggers the proteasomal degradation of TH through the ubiquitin-proteasome pathway. Phosphorylation at Ser-31 facilitates transport of TH from the soma to the nerve terminals via the microtubule network. Phosphorylation at Ser-19 induces the high-affinity binding to the 14-3-3 protein YWHAG; this interaction may influence the phosphorylation and dephosphorylation of other sites. Ser-19 increases the phosphorylation at Ser-40 in a hierarchical manner, leading to increased activity. In terms of tissue distribution, expressed in the adrenal gland. Expressed in the retina. Expressed in the in the striatum (at protein level).

Its subcellular location is the cytoplasm. The protein resides in the perinuclear region. It is found in the nucleus. It localises to the cell projection. The protein localises to the axon. Its subcellular location is the cytoplasmic vesicle. The protein resides in the secretory vesicle. It is found in the synaptic vesicle. It catalyses the reaction (6R)-L-erythro-5,6,7,8-tetrahydrobiopterin + L-tyrosine + O2 = (4aS,6R)-4a-hydroxy-L-erythro-5,6,7,8-tetrahydrobiopterin + L-dopa. It participates in catecholamine biosynthesis; dopamine biosynthesis; dopamine from L-tyrosine: step 1/2. Inhibited in feedback fashion by the catecholamine neurotransmitters, especially by dopamine in competition with tetrahydrobiopterin. Phosphorylation of several Ser/Thr residues in the N-terminus regulates the catalytic activity. Ser-31 and Ser-40 are readily phosphorylated to activate the catalytic activity. A Cysteine modification induced by N-ethylmaleimide (NEM), inhibits tyrosine 3-monooxygenase activity through the modification of the Cys-177. Functionally, catalyzes the conversion of L-tyrosine to L-dihydroxyphenylalanine (L-Dopa), the rate-limiting step in the biosynthesis of catecholamines, dopamine, noradrenaline, and adrenaline. Uses tetrahydrobiopterin and molecular oxygen to convert tyrosine to L-Dopa. In addition to tyrosine, is able to catalyze the hydroxylation of phenylalanine and tryptophan with lower specificity. Positively regulates the regression of retinal hyaloid vessels during postnatal development. The chain is Tyrosine 3-monooxygenase (Th) from Mus musculus (Mouse).